The following is a 204-amino-acid chain: phospholipase A2 inhibitor and Ly6/PLAUR domain-containing protein (204 aa).

An N-terminal signal peptide occupies residues 1–26 (MRLSRRPETFLLAFVLLCTLLGLGCP). A UPAR/Ly6 domain is found at 27–117 (LHCEICTAAG…NSAFLSVPLT (91 aa)). 7 cysteine pairs are disulfide-bonded: cysteine 29-cysteine 53, cysteine 32-cysteine 39, cysteine 46-cysteine 74, cysteine 80-cysteine 101, cysteine 102-cysteine 107, cysteine 126-cysteine 151, and cysteine 144-cysteine 172.

This sequence belongs to the CNF-like-inhibitor family.

The protein resides in the secreted. The polypeptide is phospholipase A2 inhibitor and Ly6/PLAUR domain-containing protein (PINLYP) (Homo sapiens (Human)).